Reading from the N-terminus, the 289-residue chain is MKFAKGHGTQNDFVLLPDLTADLALTPAAVAALCDRRQGLGADGVLRVTTAGAARAAGVFDRLPEGVVEGDWYMDYRNADGSIAQMCGNGVRVFAHYLRASGLESRDEFVVGSLAGPRPVVLNALAGVGADVTVEMGKANQLGVGAATVGGRQFNGLAVDVGNPHLACVDAAMSSRELAALDVAAPVVFDAAQFPDGVNVEVLTAPEDGAVSMRVHERGVGETRSCGTGTVAAAVAALAHQGSQTGSLTVRIPGGEVVVTITDANSYLRGPSVLVAHGDLADEWWAAQG.

The substrate site is built by N11 and N78. C87 (proton donor) is an active-site residue. Residues 88–89 (GN), N163, N199, and 217–218 (ER) each bind substrate. The Proton acceptor role is filled by C226. A substrate-binding site is contributed by 227–228 (GT).

The protein belongs to the diaminopimelate epimerase family. As to quaternary structure, homodimer.

It is found in the cytoplasm. The catalysed reaction is (2S,6S)-2,6-diaminopimelate = meso-2,6-diaminopimelate. It functions in the pathway amino-acid biosynthesis; L-lysine biosynthesis via DAP pathway; DL-2,6-diaminopimelate from LL-2,6-diaminopimelate: step 1/1. Its function is as follows. Catalyzes the stereoinversion of LL-2,6-diaminopimelate (L,L-DAP) to meso-diaminopimelate (meso-DAP), a precursor of L-lysine and an essential component of the bacterial peptidoglycan. The polypeptide is Diaminopimelate epimerase (Mycolicibacterium vanbaalenii (strain DSM 7251 / JCM 13017 / BCRC 16820 / KCTC 9966 / NRRL B-24157 / PYR-1) (Mycobacterium vanbaalenii)).